The following is a 1021-amino-acid chain: Phytosulfokine receptor 1 (1021 aa).

An N-terminal signal peptide occupies residues 1–24 (MGVLRVYVILILVGFCVQIVVVNS). One copy of the LRR 1 repeat lies at 21 to 43 (VVNSQNLTCNSNDLKALEGFMRG). N26, N54, and N83 each carry an N-linked (GlcNAc...) asparagine glycan. LRR repeat units follow at residues 85–109 (SGRV…VAKL), 110–133 (DQLK…LLNL), 135–156 (NLEV…LINL), 158–180 (SLRV…LCNN), 181–205 (LPRI…IGNC), 206–229 (SSVE…LFQL), 231–252 (NLSV…KLGK), 253–277 (LSNL…FLEL), 301–325 (SRSI…CSAM), 326–349 (TNLT…LPNC), 351–372 (RLKT…SFKN), 373–397 (FQSL…EILQ), 402–426 (LKTL…QFKN), 428–448 (KVLI…LSNS), 449–474 (PSLQ…SLNS), and 476–496 (FYLD…LTSL). N-linked (GlcNAc...) asparagine glycosylation is found at N116 and N132. N-linked (GlcNAc...) asparagine glycans are attached at residues N204, N217, and N231. N-linked (GlcNAc...) asparagine glycans are attached at residues N311, N321, and N327. Residues N383 and N388 are each glycosylated (N-linked (GlcNAc...) asparagine). 5 N-linked (GlcNAc...) asparagine glycosylation sites follow: N482, N546, N568, N576, and N592. An LRR 18; atypical repeat occupies 498–555 (SLVSKENAVEEPSPDFPFFKKKNTNAGGLQYNQPSSFPPMIDLSYNSLNGSIWPEFGD). LRR repeat units lie at residues 556-580 (LRQL…LSGM), 581-604 (TSLE…LVKL), and 606-629 (FLST…QFQT). N632 carries an N-linked (GlcNAc...) asparagine glycan. The helical transmembrane segment at 673–693 (VAVGTGLGTVFLLTVTLLIIL) threads the bilayer. Positions 743-1014 (FNQANIIGCG…PTTQQLVSWL (272 aa)) constitute a Protein kinase domain. ATP contacts are provided by residues 749-757 (IGCGGFGLV) and K771. D869 functions as the Proton acceptor in the catalytic mechanism.

This sequence belongs to the protein kinase superfamily. Ser/Thr protein kinase family. In terms of processing, N-glycosylated. As to expression, expressed ubiquitously in leaf, apical meristem, hypocotyl and root.

Its subcellular location is the cell membrane. It catalyses the reaction L-seryl-[protein] + ATP = O-phospho-L-seryl-[protein] + ADP + H(+). The enzyme catalyses L-threonyl-[protein] + ATP = O-phospho-L-threonyl-[protein] + ADP + H(+). Phytosulfokine receptor with a serine/threonine-protein kinase activity. Regulates, in response to phytosulfokine binding, a signaling cascade involved in plant cell differentiation, organogenesis and somatic embryogenesis. This Daucus carota (Wild carrot) protein is Phytosulfokine receptor 1 (PSKR).